The sequence spans 206 residues: 2,3-bisphosphoglycerate-dependent phosphoglycerate mutase (206 aa).

Substrate-binding positions include 9-16 (RHGQSEWN), 22-23 (TG), Arg61, 88-91 (ERDY), Lys99, 115-116 (RR), and 159-160 (GN). His10 (tele-phosphohistidine intermediate) is an active-site residue. The Proton donor/acceptor role is filled by Glu88.

Belongs to the phosphoglycerate mutase family. BPG-dependent PGAM subfamily. Homodimer.

The catalysed reaction is (2R)-2-phosphoglycerate = (2R)-3-phosphoglycerate. It participates in carbohydrate degradation; glycolysis; pyruvate from D-glyceraldehyde 3-phosphate: step 3/5. Catalyzes the interconversion of 2-phosphoglycerate and 3-phosphoglycerate. This Azorhizobium caulinodans (strain ATCC 43989 / DSM 5975 / JCM 20966 / LMG 6465 / NBRC 14845 / NCIMB 13405 / ORS 571) protein is 2,3-bisphosphoglycerate-dependent phosphoglycerate mutase.